Consider the following 800-residue polypeptide: Ion-translocating oxidoreductase complex subunit C (800 aa).

4Fe-4S ferredoxin-type domains lie at 367–398 (DEFSVPQAEQPCIRCGACADVCPARLLPQQLY) and 408–437 (KARGYHLQECIECGACAYVCPSNIPLVQYY). 8 residues coordinate [4Fe-4S] cluster: Cys378, Cys381, Cys384, Cys388, Cys417, Cys420, Cys423, and Cys427. 5 stretches are compositionally biased toward low complexity: residues 536-553 (GATPAPAATDSDAAAPAP), 571-583 (AKQAGATPAPAAT), 599-617 (AAIARAKAKQAGATPAPAA), 647-667 (AKQAGATPAPATTDSDAADPA), and 675-690 (AAIAAAIARAKAKQAA). Disordered stretches follow at residues 536–558 (GATPAPAATDSDAAAPAPQDDPR), 571–631 (AKQA…QDDP), and 647–706 (AKQA…ENTD). The span at 693–705 (HATTEPVTVQENT) shows a compositional bias: polar residues.

It belongs to the 4Fe4S bacterial-type ferredoxin family. RnfC subfamily. As to quaternary structure, the complex is composed of six subunits: RnfA, RnfB, RnfC, RnfD, RnfE and RnfG. It depends on [4Fe-4S] cluster as a cofactor.

The protein resides in the cell inner membrane. Part of a membrane-bound complex that couples electron transfer with translocation of ions across the membrane. This is Ion-translocating oxidoreductase complex subunit C from Edwardsiella ictaluri (strain 93-146).